Consider the following 892-residue polypeptide: Dipeptidyl peptidase 8 (892 aa).

Catalysis depends on charge relay system residues Ser749, Asp827, and His859.

This sequence belongs to the peptidase S9B family. DPPIV subfamily. In terms of assembly, homodimer. Forms a ternary complex with NLRP1, composed of a DPP8 homodimer, one full-length NLRP1 protein, and one cleaved C-terminus of NLRP1 (NACHT, LRR and PYD domains-containing protein 1, C-terminus). Forms a ternary complex with CARD8, composed of a DPP8 homodimer, one full-length NLRP1 protein, and one cleaved C-terminus of CARD8 (Caspase recruitment domain-containing protein 8, C-terminus). In the ternary complex, only one subunit of the DPP8 homodimer is bound to NLRP1 or CARD8.

It is found in the cytoplasm. It carries out the reaction Release of an N-terminal dipeptide, Xaa-Yaa-|-Zaa-, from a polypeptide, preferentially when Yaa is Pro, provided Zaa is neither Pro nor hydroxyproline.. Inhibited by zinc. Inhibited by the serine proteinase inhibitor 4-(2-aminoethyl)benzenesulphonyl fluoride (AEBSF), and by di-isopropylfluorophosphate. Specifically inhibited by isoindoline derivatives. Inhibited by Val-boroPro (Talabostat, PT-100), a non-selective inhibitor, which triggers pyroptosis in monocytes and macrophages. In terms of biological role, dipeptidyl peptidase that cleaves off N-terminal dipeptides from proteins having a Pro or Ala residue at position 2. Acts as a key inhibitor of caspase-1-dependent monocyte and macrophage pyroptosis in resting cells by preventing activation of NLRP1 and CARD8. Sequesters the cleaved C-terminal part of NLRP1 and CARD8, which respectively constitute the active part of the NLRP1 and CARD8 inflammasomes, in a ternary complex, thereby preventing their oligomerization and activation. The dipeptidyl peptidase activity is required to suppress NLRP1 and CARD8; however, neither NLRP1 nor CARD8 are bona fide substrates of DPP8, suggesting the existence of substrate(s) required for NLRP1 and CARD8 inhibition. The protein is Dipeptidyl peptidase 8 of Mus musculus (Mouse).